An 84-amino-acid polypeptide reads, in one-letter code: Putative membrane protein insertion efficiency factor (84 aa).

It belongs to the UPF0161 family.

It is found in the cell inner membrane. In terms of biological role, could be involved in insertion of integral membrane proteins into the membrane. This Shewanella baltica (strain OS195) protein is Putative membrane protein insertion efficiency factor.